The chain runs to 283 residues: 2-heptyl-4(1H)-quinolone synthase subunit PqsB (283 aa).

This sequence belongs to the thiolase-like superfamily. FabH family. As to quaternary structure, forms a tight complex with PqsC.

It is found in the cytoplasm. With respect to regulation, activity of the complex is inhibited by 2-aminoacetophenone (2-AA). Required for the biosynthesis of the quorum-sensing signaling molecules 2-heptyl-4(1H)-quinolone (HHQ) and 2-heptyl-3-hydroxy-4(1H)-quinolone (Pseudomonas quinolone signal or PQS), which are important for biofilm formation and virulence. The PqsC/PqsB complex catalyzes the condensation of 2-aminobenzoylacetate (2-ABA) and octanoyl-CoA to form HHQ. PqsB, together with PqsC, catalyzes the coupling of 2-ABA with the octanoate group, leading to decarboxylation and dehydration, and resulting in closure of the quinoline ring. PqsB is probably required for the proper folding of PqsC rather than for a direct enzymatic role in the process. The sequence is that of 2-heptyl-4(1H)-quinolone synthase subunit PqsB from Pseudomonas aeruginosa (strain ATCC 15692 / DSM 22644 / CIP 104116 / JCM 14847 / LMG 12228 / 1C / PRS 101 / PAO1).